The chain runs to 151 residues: SsrA-binding protein (151 aa).

The interval 131–151 (KRESIKEKDWKRDQSRLIRQK) is disordered.

This sequence belongs to the SmpB family.

It localises to the cytoplasm. Required for rescue of stalled ribosomes mediated by trans-translation. Binds to transfer-messenger RNA (tmRNA), required for stable association of tmRNA with ribosomes. tmRNA and SmpB together mimic tRNA shape, replacing the anticodon stem-loop with SmpB. tmRNA is encoded by the ssrA gene; the 2 termini fold to resemble tRNA(Ala) and it encodes a 'tag peptide', a short internal open reading frame. During trans-translation Ala-aminoacylated tmRNA acts like a tRNA, entering the A-site of stalled ribosomes, displacing the stalled mRNA. The ribosome then switches to translate the ORF on the tmRNA; the nascent peptide is terminated with the 'tag peptide' encoded by the tmRNA and targeted for degradation. The ribosome is freed to recommence translation, which seems to be the essential function of trans-translation. The protein is SsrA-binding protein of Rickettsia bellii (strain OSU 85-389).